A 1300-amino-acid polypeptide reads, in one-letter code: Insulin receptor-related protein (1300 aa).

The N-terminal stretch at 1–26 is a signal peptide; sequence MAVPALWPWGVHLLMSLLSLGSGLDT. Asparagine 47 and asparagine 100 each carry an N-linked (GlcNAc...) asparagine glycan. 9 disulfide bridges follow: cysteine 214/cysteine 222, cysteine 216/cysteine 228, cysteine 229/cysteine 237, cysteine 233/cysteine 246, cysteine 249/cysteine 258, cysteine 262/cysteine 274, cysteine 280/cysteine 300, cysteine 304/cysteine 317, and cysteine 320/cysteine 324. A glycan (N-linked (GlcNAc...) asparagine) is linked at asparagine 311. 8 N-linked (GlcNAc...) asparagine glycosylation sites follow: asparagine 411, asparagine 492, asparagine 528, asparagine 616, asparagine 634, asparagine 756, asparagine 885, and asparagine 898. 2 consecutive Fibronectin type-III domains span residues 483–603 and 607–707; these read QTRT…TLPA and VPQD…AQEV. An intrachain disulfide couples cysteine 657 to cysteine 864. Residues 747–921 lie on the Extracellular side of the membrane; sequence EAGLLRLGKN…LEEEDTGGMR (175 aa). In terms of domain architecture, Fibronectin type-III 3 spans 818-913; the sequence is IPGKVAWKAA…GVTFYITDLE (96 aa). The helical transmembrane segment at 922–943 threads the bilayer; that stretch reads IFLTVTPVGFMLLVTLAALGFF. At 944 to 1300 the chain is on the cytoplasmic side; sequence YSRKRNSTLY…YSAPNGGPGH (357 aa). Positions 979-1254 constitute a Protein kinase domain; sequence IAIIRELGQG…RIQDELRPSF (276 aa). ATP is bound by residues 985–993 and lysine 1013; that span reads LGQGSFGMV. The active-site Proton acceptor is the aspartate 1115. Residues tyrosine 1145 and tyrosine 1146 each carry the phosphotyrosine; by autocatalysis modification. Residues 1273-1300 are disordered; that stretch reads LPTEAEPDSPPTLNGASDYSAPNGGPGH.

The protein belongs to the protein kinase superfamily. Tyr protein kinase family. Insulin receptor subfamily. In terms of assembly, probable tetramer of 2 alpha and 2 beta chains linked by disulfide bonds. The alpha chains contribute to the formation of the ligand-binding domain, while the beta chains carry the kinase domain. Autophosphorylated on tyrosine residues between pH 7.9 and pH 10.5. Highly expressed in the islets as well as in pancreatic beta-cells.

It localises to the membrane. It catalyses the reaction L-tyrosyl-[protein] + ATP = O-phospho-L-tyrosyl-[protein] + ADP + H(+). In terms of biological role, receptor with tyrosine-protein kinase activity. Functions as a pH sensing receptor which is activated by increased extracellular pH. Activates an intracellular signaling pathway that involves IRS1 and AKT1/PKB. The chain is Insulin receptor-related protein (Insrr) from Mus musculus (Mouse).